The primary structure comprises 361 residues: Dihydroorotate dehydrogenase (quinone) (361 aa).

FMN-binding positions include 67–71 (AGLDK) and threonine 91. Lysine 71 is a binding site for substrate. 116–120 (NRMGF) serves as a coordination point for substrate. FMN contacts are provided by asparagine 145 and asparagine 178. Residue asparagine 178 participates in substrate binding. Catalysis depends on serine 181, which acts as the Nucleophile. A substrate-binding site is contributed by asparagine 183. Lysine 223 and glycine 251 together coordinate FMN. Position 252–253 (252–253 (NT)) interacts with substrate. FMN is bound by residues glycine 273, glycine 302, and 323 to 324 (YT).

This sequence belongs to the dihydroorotate dehydrogenase family. Type 2 subfamily. As to quaternary structure, monomer. The cofactor is FMN.

Its subcellular location is the cell membrane. The catalysed reaction is (S)-dihydroorotate + a quinone = orotate + a quinol. The protein operates within pyrimidine metabolism; UMP biosynthesis via de novo pathway; orotate from (S)-dihydroorotate (quinone route): step 1/1. Functionally, catalyzes the conversion of dihydroorotate to orotate with quinone as electron acceptor. The chain is Dihydroorotate dehydrogenase (quinone) from Deinococcus geothermalis (strain DSM 11300 / CIP 105573 / AG-3a).